Reading from the N-terminus, the 277-residue chain is Thiazole synthase (277 aa).

The active-site Schiff-base intermediate with DXP is K119. 1-deoxy-D-xylulose 5-phosphate is bound by residues G180, A206–G207, and N228–T229.

The protein belongs to the ThiG family. In terms of assembly, homotetramer. Forms heterodimers with either ThiH or ThiS.

The protein localises to the plastid. It is found in the chloroplast. It carries out the reaction [ThiS sulfur-carrier protein]-C-terminal-Gly-aminoethanethioate + 2-iminoacetate + 1-deoxy-D-xylulose 5-phosphate = [ThiS sulfur-carrier protein]-C-terminal Gly-Gly + 2-[(2R,5Z)-2-carboxy-4-methylthiazol-5(2H)-ylidene]ethyl phosphate + 2 H2O + H(+). It participates in cofactor biosynthesis; thiamine diphosphate biosynthesis. Its function is as follows. Catalyzes the rearrangement of 1-deoxy-D-xylulose 5-phosphate (DXP) to produce the thiazole phosphate moiety of thiamine. Sulfur is provided by the thiocarboxylate moiety of the carrier protein ThiS. In vitro, sulfur can be provided by H(2)S. The protein is Thiazole synthase of Pyropia yezoensis (Susabi-nori).